Here is a 95-residue protein sequence, read N- to C-terminus: Aspartyl/glutamyl-tRNA(Asn/Gln) amidotransferase subunit C (95 aa).

Belongs to the GatC family. In terms of assembly, heterotrimer of A, B and C subunits.

The enzyme catalyses L-glutamyl-tRNA(Gln) + L-glutamine + ATP + H2O = L-glutaminyl-tRNA(Gln) + L-glutamate + ADP + phosphate + H(+). The catalysed reaction is L-aspartyl-tRNA(Asn) + L-glutamine + ATP + H2O = L-asparaginyl-tRNA(Asn) + L-glutamate + ADP + phosphate + 2 H(+). Functionally, allows the formation of correctly charged Asn-tRNA(Asn) or Gln-tRNA(Gln) through the transamidation of misacylated Asp-tRNA(Asn) or Glu-tRNA(Gln) in organisms which lack either or both of asparaginyl-tRNA or glutaminyl-tRNA synthetases. The reaction takes place in the presence of glutamine and ATP through an activated phospho-Asp-tRNA(Asn) or phospho-Glu-tRNA(Gln). This is Aspartyl/glutamyl-tRNA(Asn/Gln) amidotransferase subunit C from Azorhizobium caulinodans (strain ATCC 43989 / DSM 5975 / JCM 20966 / LMG 6465 / NBRC 14845 / NCIMB 13405 / ORS 571).